A 200-amino-acid chain; its full sequence is ADP-ribosylation factor-like protein 4A (200 aa).

Glycine 2 carries N-myristoyl glycine lipidation. Residues glycine 27 to threonine 34, aspartate 75 to glutamine 79, and asparagine 134 to aspartate 137 each bind GTP.

Belongs to the small GTPase superfamily. Arf family. As to quaternary structure, interacts with CYTH2. Interacts with KPNA2; the interaction is direct. Does not interact with ARL4A. Myristoylated. Expressed strongly in testis and liver. Expressed slightly in heart, spleen, lung and kidney.

It is found in the cell membrane. The protein resides in the cytoplasm. Its subcellular location is the nucleus. The protein localises to the nucleolus. Its function is as follows. Small GTP-binding protein which cycles between an inactive GDP-bound and an active GTP-bound form, and the rate of cycling is regulated by guanine nucleotide exchange factors (GEF) and GTPase-activating proteins (GAP). GTP-binding protein that does not act as an allosteric activator of the cholera toxin catalytic subunit. Recruits CYTH1, CYTH2, CYTH3 and CYTH4 to the plasma membrane in GDP-bound form. In Mus musculus (Mouse), this protein is ADP-ribosylation factor-like protein 4A (Arl4a).